The sequence spans 231 residues: Biosynthetic peptidoglycan transglycosylase (231 aa).

The helical transmembrane segment at 10-30 (LLLLGLIGLFLVWQLWLLGWV) threads the bilayer.

Belongs to the glycosyltransferase 51 family.

It is found in the cell inner membrane. It carries out the reaction [GlcNAc-(1-&gt;4)-Mur2Ac(oyl-L-Ala-gamma-D-Glu-L-Lys-D-Ala-D-Ala)](n)-di-trans,octa-cis-undecaprenyl diphosphate + beta-D-GlcNAc-(1-&gt;4)-Mur2Ac(oyl-L-Ala-gamma-D-Glu-L-Lys-D-Ala-D-Ala)-di-trans,octa-cis-undecaprenyl diphosphate = [GlcNAc-(1-&gt;4)-Mur2Ac(oyl-L-Ala-gamma-D-Glu-L-Lys-D-Ala-D-Ala)](n+1)-di-trans,octa-cis-undecaprenyl diphosphate + di-trans,octa-cis-undecaprenyl diphosphate + H(+). It participates in cell wall biogenesis; peptidoglycan biosynthesis. Its function is as follows. Peptidoglycan polymerase that catalyzes glycan chain elongation from lipid-linked precursors. The polypeptide is Biosynthetic peptidoglycan transglycosylase (Dechloromonas aromatica (strain RCB)).